A 213-amino-acid chain; its full sequence is Ras-related protein Rab-39B (213 aa).

The GTP site is built by Ser-17, Gly-20, Lys-21, Ser-22, Cys-23, Ser-37, and Thr-40. A Mg(2+)-binding site is contributed by Ser-22. Residues 35–43 (QVSDPTVGV) form a switch-I region. Mg(2+)-binding residues include Thr-40 and Asp-64. GTP is bound by residues Gly-67, His-123, Lys-124, Asp-126, Ala-154, and Arg-155. The segment at 67–83 (GQERFRSITRAYYRNSV) is switch-II. The residue at position 201 (Ser-201) is a Phosphoserine. Residues Cys-211 and Cys-213 are each lipidated (S-geranylgeranyl cysteine). Residue Cys-213 is modified to Cysteine methyl ester.

Belongs to the small GTPase superfamily. Rab family. As to quaternary structure, interacts (GDP-bound) with C9orf72; C9orf72 in complex with SMCR8 acts as a GEF for RAB39B. Interacts (in GTP-bound form) with PICK1 (via PDZ domain); a PICK1 homodimer may allow simultaneous association of RAB39B and GRIA2 to PICK1 which is involved in GRIA2 trafficking. Interacts with isoform c of RASSF1; the interaction is strong. Interacts with isoform a of RASSF1; the interaction is weak. Interacts with the DLG4/PSD-95. Interacts (GTP-bound) with HOPS complex components VPS39 and VPS41. It depends on Mg(2+) as a cofactor. In terms of tissue distribution, specifically expressed in neuron and neuronal precursors in the brain. Expression is high in all regions of the brain with highest levels observed in the hippocampus.

It localises to the cell membrane. The protein resides in the cytoplasmic vesicle membrane. The protein localises to the golgi apparatus. It is found in the cytoplasmic vesicle. Its subcellular location is the autophagosome membrane. It localises to the autolysosome membrane. It catalyses the reaction GTP + H2O = GDP + phosphate + H(+). With respect to regulation, regulated by guanine nucleotide exchange factors (GEFs) including C9orf72-SMCR8 complex, which promote the exchange of bound GDP for free GTP. Regulated by GTPase activating proteins (GAPs) which increase the GTP hydrolysis activity. Inhibited by GDP dissociation inhibitors (GDIs). The small GTPases Rab are key regulators of intracellular membrane trafficking, from the formation of transport vesicles to their fusion with membranes. Rabs cycle between an inactive GDP-bound form and an active GTP-bound form that is able to recruit to membranes different sets of downstream effectors directly responsible for vesicle formation, movement, tethering and fusion. RAB39B is involved in autophagy and may function in autophagosome formation. Binds downstream effector PICK1 to ensure selectively GRIA2 exit from the endoplasmic reticulum to the Golgi and to regulate AMPAR composition at the post-synapses and thus synaptic transmission. May regulate the homeostasis of SNCA/alpha-synuclein. The sequence is that of Ras-related protein Rab-39B from Mus musculus (Mouse).